Reading from the N-terminus, the 321-residue chain is MKFGIEFVPNEPIEKIVKLVKLAEDVGFEYAWITDHYNNKNVYETLALIAEGTETIKLGPGVTNPYVRSPAITASAIATLDELSNGRATLGIGPGDKATFDALGIEWVKPVSTIRDAIAMMRTLLAGEKTESGAQLMGVKAVQEKIPIYMGAQGPMMLKTAGEISDGALINASNPKDFEAAVPLIKEGAESAGKSLSDIDVAAYTCCSIDEDSAAAANAAKIVVAFIAAGSPPPVFERHGLPADTGAKFGELLGKGDFGGAIGAVDDALMEAFSVVGTPDEFIPKIEALGEMGVTQYVAGSPIGPDKEKSIKLLGEVIASF.

Belongs to the mer family.

It is found in the cytoplasm. The enzyme catalyses 5-methyl-5,6,7,8-tetrahydromethanopterin + oxidized coenzyme F420-(gamma-L-Glu)(n) + H(+) = 5,10-methylenetetrahydromethanopterin + reduced coenzyme F420-(gamma-L-Glu)(n). It participates in one-carbon metabolism; methanogenesis from CO(2); methyl-coenzyme M from 5,10-methylene-5,6,7,8-tetrahydromethanopterin: step 1/2. Catalyzes the reversible reduction of methylene-H(4)MPT to methyl-H(4)MPT. The chain is 5,10-methylenetetrahydromethanopterin reductase from Methanothermobacter thermautotrophicus (strain ATCC 29096 / DSM 1053 / JCM 10044 / NBRC 100330 / Delta H) (Methanobacterium thermoautotrophicum).